A 425-amino-acid chain; its full sequence is Histidine--tRNA ligase (425 aa).

The protein belongs to the class-II aminoacyl-tRNA synthetase family. Homodimer.

The protein resides in the cytoplasm. The enzyme catalyses tRNA(His) + L-histidine + ATP = L-histidyl-tRNA(His) + AMP + diphosphate + H(+). The sequence is that of Histidine--tRNA ligase from Shewanella sp. (strain W3-18-1).